We begin with the raw amino-acid sequence, 228 residues long: MQLKKPHFQPNKIANCIVIGGMIALGKTTIANTLANHIQAAKVVCELETNDQLVELLLAKMYERSDELLYSPLFQLYFTLNRFGKYQNNCNTINPTIFDRSIFEDWLFAKHNIIRPAVFSYYNQLWNRLAKELVNKHGVPNLYVILDGDWKLFEKRLFMRNRKVEIDNFTKNQLYFQNLHRVYTGFMEAVCNDFGINYCIIDAKLPIVTIIKMILEKLKLQKLDWKFI.

ATP is bound at residue 21–28; sequence GMIALGKT.

This is an uncharacterized protein from Mycoplasma genitalium (strain ATCC 33530 / DSM 19775 / NCTC 10195 / G37) (Mycoplasmoides genitalium).